The chain runs to 248 residues: Cobalt-precorrin-6A reductase (248 aa).

It belongs to the precorrin-6x reductase family.

It catalyses the reaction Co-precorrin-6B + NAD(+) = Co-precorrin-6A + NADH + H(+). The protein operates within cofactor biosynthesis; adenosylcobalamin biosynthesis; cob(II)yrinate a,c-diamide from sirohydrochlorin (anaerobic route): step 7/10. Functionally, catalyzes the reduction of the macrocycle of cobalt-precorrin-6A to cobalt-precorrin-6B. This chain is Cobalt-precorrin-6A reductase (cbiJ), found in Methanococcus maripaludis (Methanococcus deltae).